The sequence spans 223 residues: PKHD-type hydroxylase CPS_3426 (223 aa).

One can recognise a Fe2OG dioxygenase domain in the interval 77 to 175 (KSMMPFIISE…RKVALTWIES (99 aa)). 3 residues coordinate Fe cation: histidine 96, aspartate 98, and histidine 156. Position 166 (arginine 166) interacts with 2-oxoglutarate.

Requires Fe(2+) as cofactor. L-ascorbate serves as cofactor.

This chain is PKHD-type hydroxylase CPS_3426, found in Colwellia psychrerythraea (strain 34H / ATCC BAA-681) (Vibrio psychroerythus).